The primary structure comprises 190 residues: Protein GrpE (190 aa).

Polar residues predominate over residues 1-18 (MTETPNTSSEEIQTSEPS). Positions 1–21 (MTETPNTSSEEIQTSEPSPDN) are disordered.

This sequence belongs to the GrpE family. In terms of assembly, homodimer.

It localises to the cytoplasm. In terms of biological role, participates actively in the response to hyperosmotic and heat shock by preventing the aggregation of stress-denatured proteins, in association with DnaK and GrpE. It is the nucleotide exchange factor for DnaK and may function as a thermosensor. Unfolded proteins bind initially to DnaJ; upon interaction with the DnaJ-bound protein, DnaK hydrolyzes its bound ATP, resulting in the formation of a stable complex. GrpE releases ADP from DnaK; ATP binding to DnaK triggers the release of the substrate protein, thus completing the reaction cycle. Several rounds of ATP-dependent interactions between DnaJ, DnaK and GrpE are required for fully efficient folding. This is Protein GrpE from Chlamydia trachomatis serovar A (strain ATCC VR-571B / DSM 19440 / HAR-13).